The primary structure comprises 250 residues: MVTIKKDFIPVSNDNRPGYAMAPAYITVHNTANTAKGADAKMHAKFVKNPNTSESWHFTVDDSVIYQHLPIDENGWHAGDGTNGTGNRKSIGIEICENADGDFEKATSNAQWLIRKLMKENNIPLNRVVPHKKWSGKECPRKLLDHWNSFLNGISSSDTPPKETSPSYPLPSGVIKLTSPYRKGTNILQLQKALAVLHFYPDKGAKNNGIDGVYGPKTANAVKRFQLMNGLTADGIYGPKTKAKLKSKLK.

Residues 1-44 form the signal peptide; the sequence is MVTIKKDFIPVSNDNRPGYAMAPAYITVHNTANTAKGADAKMHA. Positions 45–141 constitute an N-acetylmuramoyl-L-alanine amidase domain; it reads KFVKNPNTSE…KKWSGKECPR (97 aa).

It belongs to the N-acetylmuramoyl-L-alanine amidase 2 family.

The protein resides in the secreted. The enzyme catalyses Hydrolyzes the link between N-acetylmuramoyl residues and L-amino acid residues in certain cell-wall glycopeptides.. Autolysins are involved in some important biological processes such as cell separation, cell-wall turnover, competence for genetic transformation, formation of the flagella and sporulation. Could play a role in mother cell lysis with CwlC. The sequence is that of N-acetylmuramoyl-L-alanine amidase CwlH (cwlH) from Bacillus subtilis (strain 168).